We begin with the raw amino-acid sequence, 986 residues long: Bifunctional glutamine synthetase adenylyltransferase/adenylyl-removing enzyme (986 aa).

Residues 1 to 473 (MTSSAPGNAD…HYARLFEGDP (473 aa)) form an adenylyl removase region. An adenylyl transferase region spans residues 478-986 (SLPPVNYGAG…RRVFTALLER (509 aa)).

The protein belongs to the GlnE family. It depends on Mg(2+) as a cofactor.

It catalyses the reaction [glutamine synthetase]-O(4)-(5'-adenylyl)-L-tyrosine + phosphate = [glutamine synthetase]-L-tyrosine + ADP. The catalysed reaction is [glutamine synthetase]-L-tyrosine + ATP = [glutamine synthetase]-O(4)-(5'-adenylyl)-L-tyrosine + diphosphate. Functionally, involved in the regulation of glutamine synthetase GlnA, a key enzyme in the process to assimilate ammonia. When cellular nitrogen levels are high, the C-terminal adenylyl transferase (AT) inactivates GlnA by covalent transfer of an adenylyl group from ATP to specific tyrosine residue of GlnA, thus reducing its activity. Conversely, when nitrogen levels are low, the N-terminal adenylyl removase (AR) activates GlnA by removing the adenylyl group by phosphorolysis, increasing its activity. The regulatory region of GlnE binds the signal transduction protein PII (GlnB) which indicates the nitrogen status of the cell. This chain is Bifunctional glutamine synthetase adenylyltransferase/adenylyl-removing enzyme, found in Bradyrhizobium sp. (strain ORS 278).